A 37-amino-acid polypeptide reads, in one-letter code: Large ribosomal subunit protein bL36 (37 aa).

This sequence belongs to the bacterial ribosomal protein bL36 family.

This Leptothrix cholodnii (strain ATCC 51168 / LMG 8142 / SP-6) (Leptothrix discophora (strain SP-6)) protein is Large ribosomal subunit protein bL36.